The chain runs to 261 residues: MHQDTVRATAFAMPLTSPAYPVGPYRFRNREYLIITYRTDPKKLRSLVPEPLELSEPLVKFEFIRMPDSTGFGNYTESGQVIPVTFRGRKGSYTHCMFLNDHPPIAGGRELWGFPKKLATPTLRTETDTLVGTLDYGPVRVATATMGYKHEAADLSAVRSSLAEPNFLLKIIPHVDGTPRICELVEYHLEDVDLRGAWAGPASLNLWSHALAPVAELPVLEVVSAMHIVADLTLALGKVVHDYLPKSEPRDLKGRSHAFAE.

The active-site Schiff-base intermediate with acetoacetate is K116.

This sequence belongs to the ADC family.

The catalysed reaction is acetoacetate + H(+) = acetone + CO2. Functionally, catalyzes the conversion of acetoacetate to acetone and carbon dioxide. The chain is Acetoacetate decarboxylase 2 from Mesorhizobium japonicum (strain LMG 29417 / CECT 9101 / MAFF 303099) (Mesorhizobium loti (strain MAFF 303099)).